The sequence spans 150 residues: MAKKSVRHIKIREIISTEQVETQDELVRRLNQFDLNVTQATVSRDIKELQLIKVPAPTGQYIYSLPNDRKYHPLEKLGRYLMDSFVNIEGTGNLLVLKTLPGNAQSIGAILDQIDWEEVLGTICGDDTCLLICHDEESANAIKTRIFNLL.

This sequence belongs to the ArgR family.

The protein localises to the cytoplasm. Its pathway is amino-acid biosynthesis; L-arginine biosynthesis [regulation]. In terms of biological role, regulates arginine biosynthesis genes. This chain is Arginine repressor, found in Staphylococcus carnosus (strain TM300).